Here is a 146-residue protein sequence, read N- to C-terminus: Inclusion membrane protein D (146 aa).

2 helical membrane-spanning segments follow: residues 38–58 and 68–88; these read AAVAVATILAIALLVVAGLLF and VVAASLFFGVGAFLLGGALVG.

The protein resides in the secreted. Its subcellular location is the host vacuole. It is found in the host pathogen-containing vacuole. It localises to the host pathogen-containing vacuole membrane. Host inclusion membrane protein probably involved in early modification events of the chlamydial inclusion. This chain is Inclusion membrane protein D, found in Chlamydia trachomatis serovar L2 (strain ATCC VR-902B / DSM 19102 / 434/Bu).